The following is a 160-amino-acid chain: Epithelial membrane protein 1 (160 aa).

A helical transmembrane segment spans residues 1–21 (MLVLLAGLFVVHIATAIMLFV). Residues Asn35 and Asn43 are each glycosylated (N-linked (GlcNAc...) asparagine). 2 helical membrane passes run 67–87 (FMILSIIFSIISLVVFVFQLF) and 95–115 (FFLSGSTMLVCWLCILVGVSI). N-linked (GlcNAc...) asparagine glycosylation occurs at Asn128. The helical transmembrane segment at 137 to 157 (FILTWICFCFSFIIGILYMVL) threads the bilayer.

This sequence belongs to the PMP-22/EMP/MP20 family.

It is found in the membrane. The protein is Epithelial membrane protein 1 (Emp1) of Mus musculus (Mouse).